A 334-amino-acid polypeptide reads, in one-letter code: MTTVYYDQDVKTDALQGKKIAVVGYGSQGHAHAQNLKDNGYDVVIGIRPGRSFDKAKEDGFDVFPVAEAVKQADVIMVLLPDEIQGDVYKNEIEPNLEKHNALAFAHGFNIHFGVIQPPADVDVFLVAPKGPGHLVRRTFVEGSAVPSLFGIQQDASGQARNIALSYAKGIGATRAGVIETTFKEETETDLFGEQAVLCGGVSKLIQSGFETLVEAGYQPELAYFEVLHEMKLIVDLMYEGGMENVRYSISNTAEFGDYVSGPRVITPDVKENMKAVLTDIQNGNFSNRFIEDNKNGFKEFYKLREEQHGHQIEKVGRELREMMPFIKSKSIEK.

Positions 1 to 181 constitute a KARI N-terminal Rossmann domain; the sequence is MTTVYYDQDV…GATRAGVIET (181 aa). Residues 25–28, R48, S52, and 82–85 contribute to the NADP(+) site; these read YGSQ and DEIQ. The active site involves H107. Residue G133 participates in NADP(+) binding. The region spanning 182–327 is the KARI C-terminal knotted domain; that stretch reads TFKEETETDL…RELREMMPFI (146 aa). The Mg(2+) site is built by D190, E194, E226, and E230. S251 is a binding site for substrate.

Belongs to the ketol-acid reductoisomerase family. Requires Mg(2+) as cofactor.

It carries out the reaction (2R)-2,3-dihydroxy-3-methylbutanoate + NADP(+) = (2S)-2-acetolactate + NADPH + H(+). It catalyses the reaction (2R,3R)-2,3-dihydroxy-3-methylpentanoate + NADP(+) = (S)-2-ethyl-2-hydroxy-3-oxobutanoate + NADPH + H(+). It participates in amino-acid biosynthesis; L-isoleucine biosynthesis; L-isoleucine from 2-oxobutanoate: step 2/4. Its pathway is amino-acid biosynthesis; L-valine biosynthesis; L-valine from pyruvate: step 2/4. Involved in the biosynthesis of branched-chain amino acids (BCAA). Catalyzes an alkyl-migration followed by a ketol-acid reduction of (S)-2-acetolactate (S2AL) to yield (R)-2,3-dihydroxy-isovalerate. In the isomerase reaction, S2AL is rearranged via a Mg-dependent methyl migration to produce 3-hydroxy-3-methyl-2-ketobutyrate (HMKB). In the reductase reaction, this 2-ketoacid undergoes a metal-dependent reduction by NADPH to yield (R)-2,3-dihydroxy-isovalerate. This chain is Ketol-acid reductoisomerase (NADP(+)), found in Staphylococcus aureus (strain Mu3 / ATCC 700698).